A 308-amino-acid chain; its full sequence is 15-cis-phytoene synthase (308 aa).

It belongs to the phytoene/squalene synthase family. ATP serves as cofactor. Mn(2+) is required as a cofactor. The cofactor is Mg(2+).

The catalysed reaction is 2 (2E,6E,10E)-geranylgeranyl diphosphate = 15-cis-phytoene + 2 diphosphate. Its pathway is carotenoid biosynthesis; phytoene biosynthesis. Functionally, involved in the biosynthesis of carotenoids. Catalyzes the condensation of two molecules of geranylgeranyl diphosphate (GGPP) to give prephytoene diphosphate (PPPP) and the subsequent rearrangement of the cyclopropylcarbinyl intermediate to yield 15-cis-phytoene. This is 15-cis-phytoene synthase (crtB) from Synechococcus elongatus (strain ATCC 33912 / PCC 7942 / FACHB-805) (Anacystis nidulans R2).